Here is a 760-residue protein sequence, read N- to C-terminus: 5-methyltetrahydropteroyltriglutamate--homocysteine methyltransferase (760 aa).

5-methyltetrahydropteroyltri-L-glutamate-binding positions include 17–20 and Lys113; that span reads RELK. Residues 433–435 and Glu486 contribute to the L-homocysteine site; that span reads IGS. Residues 433 to 435 and Glu486 each bind L-methionine; that span reads IGS. Residues 517–518 and Trp563 each bind 5-methyltetrahydropteroyltri-L-glutamate; that span reads RC. Position 601 (Asp601) interacts with L-homocysteine. Residue Asp601 coordinates L-methionine. Residue Glu607 participates in 5-methyltetrahydropteroyltri-L-glutamate binding. Zn(2+) is bound by residues His643, Cys645, and Glu667. Catalysis depends on His696, which acts as the Proton donor. Cys728 lines the Zn(2+) pocket.

Belongs to the vitamin-B12 independent methionine synthase family. It depends on Zn(2+) as a cofactor.

It catalyses the reaction 5-methyltetrahydropteroyltri-L-glutamate + L-homocysteine = tetrahydropteroyltri-L-glutamate + L-methionine. The protein operates within amino-acid biosynthesis; L-methionine biosynthesis via de novo pathway; L-methionine from L-homocysteine (MetE route): step 1/1. In terms of biological role, catalyzes the transfer of a methyl group from 5-methyltetrahydrofolate to homocysteine resulting in methionine formation. The chain is 5-methyltetrahydropteroyltriglutamate--homocysteine methyltransferase from Chromobacterium violaceum (strain ATCC 12472 / DSM 30191 / JCM 1249 / CCUG 213 / NBRC 12614 / NCIMB 9131 / NCTC 9757 / MK).